The primary structure comprises 434 residues: 3-phosphoshikimate 1-carboxyvinyltransferase (434 aa).

3-phosphoshikimate contacts are provided by Lys-22, Ser-23, and Arg-27. A phosphoenolpyruvate-binding site is contributed by Lys-22. Residues Gly-93 and Arg-121 each coordinate phosphoenolpyruvate. 3-phosphoshikimate is bound by residues Ser-168, Ser-169, Gln-170, Ser-199, Asp-320, and Lys-347. Gln-170 contributes to the phosphoenolpyruvate binding site. Residue Asp-320 is the Proton acceptor of the active site. Phosphoenolpyruvate-binding residues include Arg-351, Arg-394, and Lys-419.

Belongs to the EPSP synthase family. In terms of assembly, monomer.

It is found in the cytoplasm. The enzyme catalyses 3-phosphoshikimate + phosphoenolpyruvate = 5-O-(1-carboxyvinyl)-3-phosphoshikimate + phosphate. It participates in metabolic intermediate biosynthesis; chorismate biosynthesis; chorismate from D-erythrose 4-phosphate and phosphoenolpyruvate: step 6/7. Catalyzes the transfer of the enolpyruvyl moiety of phosphoenolpyruvate (PEP) to the 5-hydroxyl of shikimate-3-phosphate (S3P) to produce enolpyruvyl shikimate-3-phosphate and inorganic phosphate. The sequence is that of 3-phosphoshikimate 1-carboxyvinyltransferase from Burkholderia orbicola (strain MC0-3).